The sequence spans 158 residues: Snaclec jerdonuxin subunit alpha (158 aa).

The signal sequence occupies residues 1-23 (MGRFTFVSFGLLVVFLSLSGTGA). 3 disulfide bridges follow: Cys-27/Cys-38, Cys-55/Cys-152, and Cys-127/Cys-144. The 120-residue stretch at 34-153 (YDRYCYQAFS…CGTENPFVCK (120 aa)) folds into the C-type lectin domain.

It belongs to the snaclec family. Tetramer of 4 heterodimers of alpha and beta subunits; disulfide-linked. Expressed by the venom gland.

The protein localises to the secreted. Functionally, snaclec that strongly induces platelet aggregation, in a dose-dependent manner. The chain is Snaclec jerdonuxin subunit alpha from Protobothrops jerdonii (Jerdon's pitviper).